A 258-amino-acid chain; its full sequence is Putative L-lactate dehydrogenase operon regulatory protein (258 aa).

Residues 6–74 (RRLSDEVADR…RGGGTFIRWR (69 aa)) form the HTH gntR-type domain. Residues 34 to 53 (ERQLAMQLGVSRNSLREALA) constitute a DNA-binding region (H-T-H motif).

Functionally, may be a regulatory protein for the LCT genes. The sequence is that of Putative L-lactate dehydrogenase operon regulatory protein (lldR) from Escherichia coli (strain K12).